The sequence spans 343 residues: Histone H1.8 (343 aa).

Positions 1–32 (MAPGSIASSDTSSSTSSSSTSSASSASAEGSS) are enriched in low complexity. Disordered regions lie at residues 1–50 (MAPG…VRAP) and 122–343 (ATGS…EAEG). Positions 52–130 (RHPPVLRMVL…GATGSFKLVP (79 aa)) constitute an H15 domain. Residues 132–142 (DKRKIPPRKTA) show a composition bias toward basic residues. Composition is skewed to basic and acidic residues over residues 150-183 (EGKDPKKPSESKKDPANTVEVKKGSRKPREERAA), 199-219 (QTKDPEPRLGEAKKSSRRPDK), and 235-247 (KVKERGSRQADTK). Residues 161-176 (KKDPANTVEVKKGSRK) carry the Nuclear localization signal motif. Positions 253–265 (QPGSQSSKSTVTK) are enriched in polar residues.

The protein belongs to the histone H1/H5 family. As to expression, oocyte (at protein level).

The protein localises to the cytoplasm. Its subcellular location is the nucleus. It is found in the chromosome. In terms of biological role, may play a key role in the control of gene expression during oogenesis and early embryogenesis, presumably through the perturbation of chromatin structure. Essential for meiotic maturation of germinal vesicle-stage oocytes. The somatic type linker histone H1c is rapidly replaced by H1oo in a donor nucleus transplanted into an oocyte. The greater mobility of H1oo as compared to H1c may contribute to this rapid replacement and increased instability of the embryonic chromatin structure. The rapid replacement of H1c with H1oo may play an important role in nuclear remodeling. The protein is Histone H1.8 of Bos taurus (Bovine).